A 328-amino-acid polypeptide reads, in one-letter code: Tetraacyldisaccharide 4'-kinase (328 aa).

An ATP-binding site is contributed by 55–62 (TAGGNGKT).

The protein belongs to the LpxK family.

It carries out the reaction a lipid A disaccharide + ATP = a lipid IVA + ADP + H(+). Its pathway is glycolipid biosynthesis; lipid IV(A) biosynthesis; lipid IV(A) from (3R)-3-hydroxytetradecanoyl-[acyl-carrier-protein] and UDP-N-acetyl-alpha-D-glucosamine: step 6/6. Its function is as follows. Transfers the gamma-phosphate of ATP to the 4'-position of a tetraacyldisaccharide 1-phosphate intermediate (termed DS-1-P) to form tetraacyldisaccharide 1,4'-bis-phosphate (lipid IVA). The chain is Tetraacyldisaccharide 4'-kinase from Escherichia coli O157:H7.